Reading from the N-terminus, the 443-residue chain is MFLAQEIIRKKRNGLVLSAEEIQFFVKGITTNAVSEGQIAALGMAVYFNDMNMDERIALTTAMRDSGTVLNWQSLNLNGPVIDKHSTGGVGDVISLMLGPMAAACGGYVPMISGRGLGHTGGTLDKFDAIPGYQTEPSSELFRKVVKDVGVAIIGQTGDLVPADKRFYSIRDNTATVESISLITASILSKKLACSLDALAMDVKVGSGAFMPTYEASEELARSIAAVANGAGTKTTALLTDMNQVLASCAGNALEVKEAIDFLTGAYRNPRLYAVTMGLCAEMLLLGGLATDEADARAKLNRVLDNGRAAEIFGKMVSGLGGPVDFVENYSKYLPQSQIIRPVFADTQGYAHSMDTRELGLAVVTLGGGRRKPGDELDYSVGLTQVCALGDKIDASTPIAVIHAQSEEAFAQAEDAVKKAIHIDEIAPEKTPEIYAYIRATDL.

It belongs to the thymidine/pyrimidine-nucleoside phosphorylase family. Homodimer.

It catalyses the reaction thymidine + phosphate = 2-deoxy-alpha-D-ribose 1-phosphate + thymine. Its pathway is pyrimidine metabolism; dTMP biosynthesis via salvage pathway; dTMP from thymine: step 1/2. Functionally, the enzymes which catalyze the reversible phosphorolysis of pyrimidine nucleosides are involved in the degradation of these compounds and in their utilization as carbon and energy sources, or in the rescue of pyrimidine bases for nucleotide synthesis. The polypeptide is Thymidine phosphorylase (Shewanella oneidensis (strain ATCC 700550 / JCM 31522 / CIP 106686 / LMG 19005 / NCIMB 14063 / MR-1)).